The sequence spans 306 residues: Recombination-associated protein RdgC (306 aa).

This sequence belongs to the RdgC family.

It localises to the cytoplasm. The protein resides in the nucleoid. In terms of biological role, may be involved in recombination. The sequence is that of Recombination-associated protein RdgC from Pseudomonas aeruginosa (strain LESB58).